A 292-amino-acid chain; its full sequence is Malonyl-[acyl-carrier protein] O-methyltransferase (292 aa).

The protein belongs to the methyltransferase superfamily.

The catalysed reaction is malonyl-[ACP] + S-adenosyl-L-methionine = malonyl-[ACP] methyl ester + S-adenosyl-L-homocysteine. It functions in the pathway cofactor biosynthesis; biotin biosynthesis. In terms of biological role, converts the free carboxyl group of a malonyl-thioester to its methyl ester by transfer of a methyl group from S-adenosyl-L-methionine (SAM). It allows to synthesize pimeloyl-ACP via the fatty acid synthetic pathway. The protein is Malonyl-[acyl-carrier protein] O-methyltransferase of Alcanivorax borkumensis (strain ATCC 700651 / DSM 11573 / NCIMB 13689 / SK2).